We begin with the raw amino-acid sequence, 556 residues long: Formate--tetrahydrofolate ligase (556 aa).

An ATP-binding site is contributed by 65–72 (TPAGEGKS).

The protein belongs to the formate--tetrahydrofolate ligase family.

It carries out the reaction (6S)-5,6,7,8-tetrahydrofolate + formate + ATP = (6R)-10-formyltetrahydrofolate + ADP + phosphate. Its pathway is one-carbon metabolism; tetrahydrofolate interconversion. This chain is Formate--tetrahydrofolate ligase, found in Clostridium novyi (strain NT).